Here is a 390-residue protein sequence, read N- to C-terminus: Chorismate synthase 2 (390 aa).

NADP(+)-binding residues include Arg-39 and Arg-45. FMN contacts are provided by residues Arg-132–Ser-134, Asn-253–Ala-254, Gly-298, Lys-313–Thr-317, and Arg-339.

It belongs to the chorismate synthase family. In terms of assembly, homotetramer. The cofactor is FMNH2.

It catalyses the reaction 5-O-(1-carboxyvinyl)-3-phosphoshikimate = chorismate + phosphate. It participates in metabolic intermediate biosynthesis; chorismate biosynthesis; chorismate from D-erythrose 4-phosphate and phosphoenolpyruvate: step 7/7. Functionally, catalyzes the anti-1,4-elimination of the C-3 phosphate and the C-6 proR hydrogen from 5-enolpyruvylshikimate-3-phosphate (EPSP) to yield chorismate, which is the branch point compound that serves as the starting substrate for the three terminal pathways of aromatic amino acid biosynthesis. This reaction introduces a second double bond into the aromatic ring system. This chain is Chorismate synthase 2, found in Bacillus cereus (strain ATCC 14579 / DSM 31 / CCUG 7414 / JCM 2152 / NBRC 15305 / NCIMB 9373 / NCTC 2599 / NRRL B-3711).